Consider the following 20-residue polypeptide: Apidaecin 2+ (20 aa).

Positions Gly1–Pro13 are enriched in pro residues. The tract at residues Gly1–Leu20 is disordered.

The protein localises to the secreted. Functionally, antimicrobial peptide active against many Gram-negative enterobacterial and plant-associated bacterial species. Not active against other bacterial species like H.pylori, P.mirabilis, B.pertussis or N.gonorrhoeae. This Pimpla disparis (Parasitic wasp) protein is Apidaecin 2+.